Consider the following 486-residue polypeptide: Coronin-1B (486 aa).

Ser2 carries the post-translational modification Phosphoserine; by PKC. WD repeat units lie at residues 80 to 120 (GHTG…LTSP), 130 to 170 (GHTK…ELYR), 174 to 213 (LHPD…LVAE), 217 to 260 (AHEG…EPMA), and 265 to 305 (DSSN…PYIH). Residues 404 to 444 (LKVSRRNVLSDSRPTSAARPAAPAPAAPAPAAAASSSLSGA) form a disordered region. Residues 432-444 (APAAAASSSLSGA) are compositionally biased toward low complexity. The stretch at 446 to 484 (EAGKLEEVMRELRALRALVKEQGERIGRLEEQLGRVENG) forms a coiled coil.

This sequence belongs to the WD repeat coronin family. As to quaternary structure, forms homooligomers, but does not form complexes with the other coronins. Interacts with Arp2/3 complex components, including ACTR2, ARPC1B and ARPC2. Binds actin. Phosphorylated in vivo by PKC in response to cholinergic stimulation. Phosphorylation on Ser-2 regulates the interaction with the Arp2/3 complex and cell motility in fibroblasts. Phosphorylation does not seem to affect subcellular location.

The protein resides in the cytoplasm. The protein localises to the cytoskeleton. It localises to the stress fiber. Its function is as follows. Regulates leading edge dynamics and cell motility in fibroblasts. May be involved in cytokinesis and signal transduction. This Oryctolagus cuniculus (Rabbit) protein is Coronin-1B (CORO1B).